The primary structure comprises 259 residues: Taurine import ATP-binding protein TauB (259 aa).

In terms of domain architecture, ABC transporter spans 4–233 (LELERISAQY…RYAAGESARA (230 aa)). 38 to 45 (GPSGSGKT) provides a ligand contact to ATP.

This sequence belongs to the ABC transporter superfamily. Taurine importer (TC 3.A.1.17.1) family. As to quaternary structure, the complex is composed of two ATP-binding proteins (TauB), two transmembrane proteins (TauC) and a solute-binding protein (TauA).

It is found in the cell inner membrane. It catalyses the reaction taurine(out) + ATP + H2O = taurine(in) + ADP + phosphate + H(+). In terms of biological role, part of the ABC transporter complex TauABC involved in taurine import. Responsible for energy coupling to the transport system. The chain is Taurine import ATP-binding protein TauB from Pseudomonas entomophila (strain L48).